Reading from the N-terminus, the 240-residue chain is Extracellular superoxide dismutase [Cu-Zn] (240 aa).

Positions 1–18 (MLALLCSCLLLAAGASDA) are cleaved as a signal peptide. Disulfide bonds link Cys-63–Cys-208 and Cys-125–Cys-207. Asn-107 is a glycosylation site (N-linked (GlcNAc...) asparagine). Cu cation is bound by residues His-114, His-116, and His-131. Zn(2+) is bound by residues His-131, His-139, His-142, and Asp-145. His-181 serves as a coordination point for Cu cation. Residues Lys-229 and Lys-230 are each glycosylated (N-linked (Glc) (glycation) lysine; in vitro).

This sequence belongs to the Cu-Zn superoxide dismutase family. Homotetramer. Directly interacts with ATP7A; this interaction is copper-dependent and is required for SOD3 activity. It depends on Cu cation as a cofactor. Zn(2+) serves as cofactor. Expressed in blood vessels, heart, lung, kidney and placenta. Major SOD isoenzyme in extracellular fluids such as plasma, lymph and synovial fluid.

It localises to the secreted. Its subcellular location is the extracellular space. It is found in the golgi apparatus. The protein localises to the trans-Golgi network. It carries out the reaction 2 superoxide + 2 H(+) = H2O2 + O2. Functionally, protect the extracellular space from toxic effect of reactive oxygen intermediates by converting superoxide radicals into hydrogen peroxide and oxygen. In Homo sapiens (Human), this protein is Extracellular superoxide dismutase [Cu-Zn] (SOD3).